A 441-amino-acid polypeptide reads, in one-letter code: Damage-control phosphatase ARMT1 (441 aa).

Residue A2 is modified to N-acetylalanine. K40 carries the N6-acetyllysine modification. Phosphoserine is present on S102. Mn(2+) contacts are provided by D253 and N254. D253–N254 is a substrate binding site. S-adenosyl-L-methionine is bound by residues E258 and D291. D291 is a Mn(2+) binding site. Residues D367–R371 and K404 each bind substrate. The Subfamily III RTxK motif signature appears at R401–K404.

The protein belongs to the damage-control phosphatase family. Sugar phosphate phosphatase III subfamily. Requires Mn(2+) as cofactor. It depends on Ni(2+) as a cofactor. In terms of processing, automethylated.

The catalysed reaction is beta-D-fructose 1-phosphate + H2O = D-fructose + phosphate. It catalyses the reaction beta-D-fructose 6-phosphate = dihydroxyacetone + D-glyceraldehyde 3-phosphate. It carries out the reaction L-glutamyl-[protein] + S-adenosyl-L-methionine = [protein]-L-glutamate 5-O-methyl ester + S-adenosyl-L-homocysteine. Functionally, metal-dependent phosphatase that shows phosphatase activity against several substrates, including fructose-1-phosphate and fructose-6-phosphate. Its preference for fructose-1-phosphate, a strong glycating agent that causes DNA damage rather than a canonical yeast metabolite, suggests a damage-control function in hexose phosphate metabolism. Has also been shown to have O-methyltransferase activity that methylates glutamate residues of target proteins to form gamma-glutamyl methyl ester residues. Possibly methylates PCNA, suggesting it is involved in the DNA damage response. This Homo sapiens (Human) protein is Damage-control phosphatase ARMT1.